Here is a 382-residue protein sequence, read N- to C-terminus: Mating-type protein a-1 (382 aa).

The HMG box DNA-binding region spans 116-184 (IPRPPNAYIL…RLLLENPDYR (69 aa)).

As to quaternary structure, binds in vitro to DNA containing a specific core sequence 5'-CTTTG-3'.

It localises to the nucleus. In terms of biological role, mating type proteins are sequence specific DNA-binding proteins that act as master switches in yeast differentiation by controlling gene expression in a cell type-specific fashion. Transcriptional activator that induces the transcription of a-specific genes like mating factor mfa-1. Required for mating as an a-cell, blocking of heterokaryon formation (vegetative incompatibility) and for perithecium induction. The sequence is that of Mating-type protein a-1 (mta-1) from Neurospora crassa.